We begin with the raw amino-acid sequence, 200 residues long: Adenylate kinase (200 aa).

Position 10–15 (10–15) interacts with ATP; it reads GAGKGT. An NMP region spans residues 30-59; the sequence is STGDMLRAAVAAETPVGLEAKAIMESGGLV. AMP-binding positions include Thr31, Arg36, 57 to 59, 85 to 88, and Gln92; these read GLV and GFPR. Positions 126–142 are LID; the sequence is KRAEETAARGQPVRKDD. Arg127 contributes to the ATP binding site. Residues Arg139 and Arg150 each contribute to the AMP site. Lys178 provides a ligand contact to ATP.

The protein belongs to the adenylate kinase family. In terms of assembly, monomer.

It localises to the cytoplasm. It catalyses the reaction AMP + ATP = 2 ADP. Its pathway is purine metabolism; AMP biosynthesis via salvage pathway; AMP from ADP: step 1/1. In terms of biological role, catalyzes the reversible transfer of the terminal phosphate group between ATP and AMP. Plays an important role in cellular energy homeostasis and in adenine nucleotide metabolism. The protein is Adenylate kinase of Methylorubrum extorquens (strain PA1) (Methylobacterium extorquens).